The primary structure comprises 488 residues: B-type flagellin (488 aa).

This sequence belongs to the bacterial flagellin family. In terms of processing, phosphorylated on tyrosine residue(s).

Its subcellular location is the secreted. The protein localises to the bacterial flagellum. Flagellin is the subunit protein which polymerizes to form the filaments of bacterial flagella. In Pseudomonas aeruginosa (strain ATCC 15692 / DSM 22644 / CIP 104116 / JCM 14847 / LMG 12228 / 1C / PRS 101 / PAO1), this protein is B-type flagellin (fliC).